Here is a 263-residue protein sequence, read N- to C-terminus: Thiazole synthase (263 aa).

The active-site Schiff-base intermediate with DXP is K100. 1-deoxy-D-xylulose 5-phosphate contacts are provided by residues G161, 187–188 (AG), and 209–210 (NT).

It belongs to the ThiG family. In terms of assembly, homotetramer. Forms heterodimers with either ThiH or ThiS.

The protein resides in the cytoplasm. The enzyme catalyses [ThiS sulfur-carrier protein]-C-terminal-Gly-aminoethanethioate + 2-iminoacetate + 1-deoxy-D-xylulose 5-phosphate = [ThiS sulfur-carrier protein]-C-terminal Gly-Gly + 2-[(2R,5Z)-2-carboxy-4-methylthiazol-5(2H)-ylidene]ethyl phosphate + 2 H2O + H(+). It functions in the pathway cofactor biosynthesis; thiamine diphosphate biosynthesis. In terms of biological role, catalyzes the rearrangement of 1-deoxy-D-xylulose 5-phosphate (DXP) to produce the thiazole phosphate moiety of thiamine. Sulfur is provided by the thiocarboxylate moiety of the carrier protein ThiS. In vitro, sulfur can be provided by H(2)S. The sequence is that of Thiazole synthase from Shouchella clausii (strain KSM-K16) (Alkalihalobacillus clausii).